The sequence spans 640 residues: Chaperone protein dnaK2 (640 aa).

Thr-197 carries the phosphothreonine; by autocatalysis modification. Residues 605–640 are disordered; sequence VYQSAQSSDGTGSSSSGGSGSGGDDEVIDAEFSETK. Residues 627–640 are compositionally biased toward acidic residues; sequence GDDEVIDAEFSETK.

The protein belongs to the heat shock protein 70 family.

Acts as a chaperone. The chain is Chaperone protein dnaK2 (dnaK2) from Thermosynechococcus vestitus (strain NIES-2133 / IAM M-273 / BP-1).